The primary structure comprises 86 residues: Omega-theraphotoxin-Hhn1e (86 aa).

Positions 1 to 21 (MKSIVFVALFGLALLAVVCSA) are cleaved as a signal peptide. A propeptide spanning residues 22–50 (SEGAHKELLKEVVRAMVVDKTDAVQAEER) is cleaved from the precursor. 2 disulfide bridges follow: C52–C66 and C65–C78.

This sequence belongs to the neurotoxin 10 (Hwtx-1) family. 17 (Hntx-9) subfamily. Expressed by the venom gland.

Its subcellular location is the secreted. In terms of biological role, ion channel inhibitor. This Cyriopagopus hainanus (Chinese bird spider) protein is Omega-theraphotoxin-Hhn1e.